A 149-amino-acid polypeptide reads, in one-letter code: UPF0178 protein Lmo1456 (149 aa).

It belongs to the UPF0178 family.

In Listeria monocytogenes serovar 1/2a (strain ATCC BAA-679 / EGD-e), this protein is UPF0178 protein Lmo1456.